A 419-amino-acid chain; its full sequence is eIF5-mimic protein 2 (419 aa).

The residue at position 1 (Met1) is an N-acetylmethionine. Positions 1 to 15 (MNNQKQQKPTLSGQR) are enriched in polar residues. The segment at 1–26 (MNNQKQQKPTLSGQRFKTRKRDEKER) is disordered. Ser12 bears the Phosphoserine mark. One can recognise a W2 domain in the interval 247–414 (NQQTIGARKE…KNAEEESESE (168 aa)). Lys368 participates in a covalent cross-link: Glycyl lysine isopeptide (Lys-Gly) (interchain with G-Cter in SUMO2). Phosphoserine occurs at positions 411 and 413.

It belongs to the BZW family.

Its function is as follows. Translation initiation regulator which represses repeat-associated non-AUG (RAN) initiated translation probably by acting as a competitive inhibitor of eukaryotic translation initiation factor 5 (EIF5) function. Enhances histone H4 gene transcription but does not seem to bind DNA directly. This chain is eIF5-mimic protein 2 (BZW1), found in Pongo abelii (Sumatran orangutan).